A 185-amino-acid chain; its full sequence is Elongation factor P (185 aa).

It belongs to the elongation factor P family.

The protein localises to the cytoplasm. Its pathway is protein biosynthesis; polypeptide chain elongation. Its function is as follows. Involved in peptide bond synthesis. Stimulates efficient translation and peptide-bond synthesis on native or reconstituted 70S ribosomes in vitro. Probably functions indirectly by altering the affinity of the ribosome for aminoacyl-tRNA, thus increasing their reactivity as acceptors for peptidyl transferase. In Deinococcus deserti (strain DSM 17065 / CIP 109153 / LMG 22923 / VCD115), this protein is Elongation factor P.